The sequence spans 159 residues: Large ribosomal subunit protein uL10 (159 aa).

It belongs to the universal ribosomal protein uL10 family. Part of the ribosomal stalk of the 50S ribosomal subunit. The N-terminus interacts with L11 and the large rRNA to form the base of the stalk. The C-terminus forms an elongated spine to which L12 dimers bind in a sequential fashion forming a multimeric L10(L12)X complex.

Functionally, forms part of the ribosomal stalk, playing a central role in the interaction of the ribosome with GTP-bound translation factors. This Sulfurimonas denitrificans (strain ATCC 33889 / DSM 1251) (Thiomicrospira denitrificans (strain ATCC 33889 / DSM 1251)) protein is Large ribosomal subunit protein uL10.